Here is a 234-residue protein sequence, read N- to C-terminus: Phosphoribosylaminoimidazole-succinocarboxamide synthase (234 aa).

Belongs to the SAICAR synthetase family.

The catalysed reaction is 5-amino-1-(5-phospho-D-ribosyl)imidazole-4-carboxylate + L-aspartate + ATP = (2S)-2-[5-amino-1-(5-phospho-beta-D-ribosyl)imidazole-4-carboxamido]succinate + ADP + phosphate + 2 H(+). The protein operates within purine metabolism; IMP biosynthesis via de novo pathway; 5-amino-1-(5-phospho-D-ribosyl)imidazole-4-carboxamide from 5-amino-1-(5-phospho-D-ribosyl)imidazole-4-carboxylate: step 1/2. This is Phosphoribosylaminoimidazole-succinocarboxamide synthase from Exiguobacterium sp. (strain ATCC BAA-1283 / AT1b).